Consider the following 178-residue polypeptide: MSKSVAKITFYDDKNFQGHHYECDSDCPDFHTYLSCCNSIRVTGGAWVVYERPNFSGNMYILTQGDYPDYHHWRGLNDRLSSCKVIHLSSGGQYKLQIFERGDFSGQMYETTEDCPSVMEQFHIREIQSCKVLDGVWVFYEQPNYYGRQYFLDKKEYRKPVDWGSPCSAVQSFRRIME.

Residue serine 2 is modified to N-acetylserine. The N-terminal arm stretch occupies residues 2-5 (SKSV). 2 consecutive Beta/gamma crystallin 'Greek key' domains span residues 6–44 (AKIT…RVTG) and 45–87 (GAWV…KVIH). The segment at 88 to 93 (LSSGGQ) is connecting peptide. Beta/gamma crystallin 'Greek key' domains lie at 94 to 134 (YKLQ…KVLD) and 135 to 177 (GVWV…RRIM).

The protein belongs to the beta/gamma-crystallin family. As to quaternary structure, monomer.

Crystallins are the dominant structural components of the vertebrate eye lens. The sequence is that of Gamma-crystallin S (CRYGS) from Macropus fuliginosus (Western gray kangaroo).